The following is a 485-amino-acid chain: DNA polymerase subunit gamma-2 (485 aa).

The interval 28–65 (GQPELLTERSSPKGGHVKSHAELEGNGEHPEAPGSGEG) is disordered. Ser-38 carries the phosphoserine modification. A compositionally biased stretch (basic and acidic residues) spans 46–58 (SHAELEGNGEHPE).

In terms of assembly, heterotrimer composed of a catalytic subunit and a homodimer of accessory subunits (POLG:POLG2).

It is found in the mitochondrion. It localises to the mitochondrion matrix. The protein localises to the mitochondrion nucleoid. Functionally, accessory subunit of DNA polymerase gamma solely responsible for replication of mitochondrial DNA (mtDNA). Acts as an allosteric regulator of the holoenzyme activities. Enhances the polymerase activity and the processivity of POLG by increasing its interactions with the DNA template. Suppresses POLG exonucleolytic proofreading especially toward homopolymeric templates bearing mismatched termini. Binds to single-stranded DNA. This is DNA polymerase subunit gamma-2 from Homo sapiens (Human).